We begin with the raw amino-acid sequence, 432 residues long: D-amino acid dehydrogenase (432 aa).

3 to 17 contacts FAD; it reads VVILGSGVVGVASAW.

The protein belongs to the DadA oxidoreductase family. FAD is required as a cofactor.

The catalysed reaction is a D-alpha-amino acid + A + H2O = a 2-oxocarboxylate + AH2 + NH4(+). The protein operates within amino-acid degradation; D-alanine degradation; NH(3) and pyruvate from D-alanine: step 1/1. Functionally, oxidative deamination of D-amino acids. This chain is D-amino acid dehydrogenase, found in Escherichia coli O127:H6 (strain E2348/69 / EPEC).